A 280-amino-acid chain; its full sequence is Probable cell division protein WhiA (280 aa).

Positions serine 246–glutamine 279 form a DNA-binding region, H-T-H motif.

Belongs to the WhiA family.

Its function is as follows. Involved in cell division and chromosome segregation. The sequence is that of Probable cell division protein WhiA from Mycoplasma pneumoniae (strain ATCC 29342 / M129 / Subtype 1) (Mycoplasmoides pneumoniae).